A 648-amino-acid chain; its full sequence is MKQSHKTLLLWVLLIMMFLAIWQFLSPDSRPATQVAFSEFMAQVQVEAKDKDPHVESVTIKDREYTFWVKDPKSGTKTKKVTIGPDNADEITKTIVDNKVAVFFEKEDTSPFWPGAIMYLLPTVFLLVMFYLFMRQLQAGGGKAMSFGKSRARLLSEAQNKVTFADVAGIDEAKDELEEIIAFLKDPKKFQKLGGRIPKGVLMMGPPGTGKTLLARAIAGEAGVPFFSISGSDFVEMFVGVGASRVRDLFEQGKKHAPCIIFIDEIDAVGRHRGAGLGGGHDEREQTLNQLLVEMDGFESNEGVIIVAATNRPDVLDPAILRPGRFDRRIVVNRPDVRGREGILRVHTKKVPLGPDVDMEILARGTPGFVGADIENLVNEAALLAARQDKDVVSMVDFEMAKDKVLMGAERRSMVISDEEKRTTAYHEAGHALVAKLLEKFSDPVHKVTIIPRGPALGLTQQLPKEDRLSMSRDFAKARLSVLMGGRVAEEIVFGQFTTGAGNDIKQASNLARRMVTEFGMSDVIGPISYGADEESVFLGRDFTSRRRDYSETIANQIDDEVRRFILDAHAEARQLLTDNREILERLATALLERETLDAEEVDAIVGGRELPQRQRVVIPSYSDRDRAAKEKRRAASIFGTPKPAPST.

Residues 1–6 (MKQSHK) are Cytoplasmic-facing. A helical transmembrane segment spans residues 7–27 (TLLLWVLLIMMFLAIWQFLSP). The Periplasmic segment spans residues 28–111 (DSRPATQVAF…VFFEKEDTSP (84 aa)). A helical membrane pass occupies residues 112–132 (FWPGAIMYLLPTVFLLVMFYL). Residues 133-648 (FMRQLQAGGG…FGTPKPAPST (516 aa)) are Cytoplasmic-facing. Position 205–212 (205–212 (GPPGTGKT)) interacts with ATP. Position 427 (H427) interacts with Zn(2+). E428 is a catalytic residue. Zn(2+) contacts are provided by H431 and D504. Residues 622-648 (YSDRDRAAKEKRRAASIFGTPKPAPST) form a disordered region.

The protein in the central section; belongs to the AAA ATPase family. This sequence in the C-terminal section; belongs to the peptidase M41 family. In terms of assembly, homohexamer. Zn(2+) is required as a cofactor.

The protein localises to the cell inner membrane. Functionally, acts as a processive, ATP-dependent zinc metallopeptidase for both cytoplasmic and membrane proteins. Plays a role in the quality control of integral membrane proteins. This chain is ATP-dependent zinc metalloprotease FtsH 4, found in Sorangium cellulosum (strain So ce56) (Polyangium cellulosum (strain So ce56)).